Reading from the N-terminus, the 464-residue chain is Glutamate--tRNA ligase (464 aa).

A 'HIGH' region motif is present at residues 9 to 19 (PSPTGYLHIGG). Residues 242–246 (KISKR) carry the 'KMSKS' region motif. An ATP-binding site is contributed by K245.

The protein belongs to the class-I aminoacyl-tRNA synthetase family. Glutamate--tRNA ligase type 1 subfamily. In terms of assembly, monomer.

It localises to the cytoplasm. The catalysed reaction is tRNA(Glu) + L-glutamate + ATP = L-glutamyl-tRNA(Glu) + AMP + diphosphate. Functionally, catalyzes the attachment of glutamate to tRNA(Glu) in a two-step reaction: glutamate is first activated by ATP to form Glu-AMP and then transferred to the acceptor end of tRNA(Glu). The chain is Glutamate--tRNA ligase from Neisseria meningitidis serogroup B (strain ATCC BAA-335 / MC58).